A 315-amino-acid polypeptide reads, in one-letter code: Methionyl-tRNA formyltransferase (315 aa).

Position 113–116 (113–116 (SILP)) interacts with (6S)-5,6,7,8-tetrahydrofolate.

This sequence belongs to the Fmt family.

It carries out the reaction L-methionyl-tRNA(fMet) + (6R)-10-formyltetrahydrofolate = N-formyl-L-methionyl-tRNA(fMet) + (6S)-5,6,7,8-tetrahydrofolate + H(+). Attaches a formyl group to the free amino group of methionyl-tRNA(fMet). The formyl group appears to play a dual role in the initiator identity of N-formylmethionyl-tRNA by promoting its recognition by IF2 and preventing the misappropriation of this tRNA by the elongation apparatus. In Vibrio vulnificus (strain CMCP6), this protein is Methionyl-tRNA formyltransferase.